We begin with the raw amino-acid sequence, 419 residues long: Diaminopimelate decarboxylase (419 aa).

Lys56 bears the N6-(pyridoxal phosphate)lysine mark. Residues Gly234 and Glu274–Arg277 contribute to the pyridoxal 5'-phosphate site. Substrate is bound by residues Arg277, Arg312, and Tyr316. Cys343 functions as the Proton donor in the catalytic mechanism. 2 residues coordinate substrate: Glu344 and Tyr372. Tyr372 lines the pyridoxal 5'-phosphate pocket.

The protein belongs to the Orn/Lys/Arg decarboxylase class-II family. LysA subfamily. In terms of assembly, homodimer. Pyridoxal 5'-phosphate is required as a cofactor.

The enzyme catalyses meso-2,6-diaminopimelate + H(+) = L-lysine + CO2. The protein operates within amino-acid biosynthesis; L-lysine biosynthesis via DAP pathway; L-lysine from DL-2,6-diaminopimelate: step 1/1. In terms of biological role, specifically catalyzes the decarboxylation of meso-diaminopimelate (meso-DAP) to L-lysine. The chain is Diaminopimelate decarboxylase from Archaeoglobus fulgidus (strain ATCC 49558 / DSM 4304 / JCM 9628 / NBRC 100126 / VC-16).